Reading from the N-terminus, the 282-residue chain is Phosphatidylglycerol--prolipoprotein diacylglyceryl transferase (282 aa).

The next 4 helical transmembrane spans lie at 19–39 (IGPI…LIGV), 59–79 (LSIW…VLFQ), 90–110 (IIAI…GTLA), and 120–140 (VPFW…QAIG). Arg-141 contacts a 1,2-diacyl-sn-glycero-3-phospho-(1'-sn-glycerol). 3 consecutive transmembrane segments (helical) span residues 181 to 201 (TFLY…TLFF), 212 to 232 (VGTL…WIEG), and 245 to 265 (IAQV…AWLY).

Belongs to the Lgt family.

The protein localises to the cell inner membrane. It carries out the reaction L-cysteinyl-[prolipoprotein] + a 1,2-diacyl-sn-glycero-3-phospho-(1'-sn-glycerol) = an S-1,2-diacyl-sn-glyceryl-L-cysteinyl-[prolipoprotein] + sn-glycerol 1-phosphate + H(+). It participates in protein modification; lipoprotein biosynthesis (diacylglyceryl transfer). In terms of biological role, catalyzes the transfer of the diacylglyceryl group from phosphatidylglycerol to the sulfhydryl group of the N-terminal cysteine of a prolipoprotein, the first step in the formation of mature lipoproteins. This is Phosphatidylglycerol--prolipoprotein diacylglyceryl transferase from Trichormus variabilis (strain ATCC 29413 / PCC 7937) (Anabaena variabilis).